The chain runs to 95 residues: Cytochrome b (95 aa).

Helical transmembrane passes span 1 to 16 (GLCL…FLAM), 40 to 61 (WLIR…YLHI), and 76 to 95 (WNIG…VGYV). Heme b-binding residues include H46 and H60.

The protein belongs to the cytochrome b family. In terms of assembly, the cytochrome bc1 complex contains 3 respiratory subunits (MT-CYB, CYC1 and UQCRFS1), 2 core proteins (UQCRC1 and UQCRC2) and probably 6 low-molecular weight proteins. The cofactor is heme b.

It localises to the mitochondrion inner membrane. Component of the ubiquinol-cytochrome c reductase complex (complex III or cytochrome b-c1 complex) that is part of the mitochondrial respiratory chain. The b-c1 complex mediates electron transfer from ubiquinol to cytochrome c. Contributes to the generation of a proton gradient across the mitochondrial membrane that is then used for ATP synthesis. In Gomphosus varius (Bird wrasse), this protein is Cytochrome b (mt-cyb).